A 356-amino-acid polypeptide reads, in one-letter code: Phosphoribosylformylglycinamidine cyclo-ligase (356 aa).

It belongs to the AIR synthase family.

The protein localises to the cytoplasm. The enzyme catalyses 2-formamido-N(1)-(5-O-phospho-beta-D-ribosyl)acetamidine + ATP = 5-amino-1-(5-phospho-beta-D-ribosyl)imidazole + ADP + phosphate + H(+). It participates in purine metabolism; IMP biosynthesis via de novo pathway; 5-amino-1-(5-phospho-D-ribosyl)imidazole from N(2)-formyl-N(1)-(5-phospho-D-ribosyl)glycinamide: step 2/2. The chain is Phosphoribosylformylglycinamidine cyclo-ligase from Sinorhizobium medicae (strain WSM419) (Ensifer medicae).